The following is a 338-amino-acid chain: MNLQRFPRYPLTFGPTPIQPLKRLSEHLGGKVELYAKREDCNSGLAFGGNKTRKLEYLVPDALEQGADTLVSIGGVQSNQTRQVAAVAAHLGMKCVLVQEHWVNYEDPVYDRVGNIQLSRMMGADVRLVSDGFDIGIRRSWEEAMESVRQAGGKPYPIPAGCSEHPLGGLGFVGFAEEVRAQEAQLGFKFDYIVVCSVTGSTQAGMVVGFAADGRANRVIGIDASATPERTHEQITRIARHTAELVDLGRPITTADVVLDTRYAGPEYGLPNDGTLEAIRLCARLEGMLTDPVYEGKSMHGMIDKVQLGEFEPGSKVLYAHLGGVPALSAYHETFRNG.

The residue at position 51 (Lys51) is an N6-(pyridoxal phosphate)lysine. Ser78 functions as the Nucleophile in the catalytic mechanism.

It belongs to the ACC deaminase/D-cysteine desulfhydrase family. Homotrimer. Pyridoxal 5'-phosphate is required as a cofactor.

The catalysed reaction is 1-aminocyclopropane-1-carboxylate + H2O = 2-oxobutanoate + NH4(+). In terms of biological role, catalyzes a cyclopropane ring-opening reaction, the irreversible conversion of 1-aminocyclopropane-1-carboxylate (ACC) to ammonia and alpha-ketobutyrate. Allows growth on ACC as a nitrogen source. The polypeptide is 1-aminocyclopropane-1-carboxylate deaminase (Burkholderia lata (strain ATCC 17760 / DSM 23089 / LMG 22485 / NCIMB 9086 / R18194 / 383)).